The sequence spans 493 residues: Alpha-amylase-related protein (493 aa).

Positions 1–19 are cleaved as a signal peptide; it reads MFKLALTLTLCLAGSLSLA. Q20 carries the post-translational modification Pyrrolidone carboxylic acid. An intrachain disulfide couples C47 to C103. Residues N117, Q168, and D177 each contribute to the Ca(2+) site. A disulfide bond links C156 and C170. Residue R205 coordinates chloride. D207 serves as the catalytic Nucleophile. H211 serves as a coordination point for Ca(2+). E244 (proton donor) is an active-site residue. Residues N307 and R342 each contribute to the chloride site. Intrachain disulfides connect C375/C381, C417/C440, and C447/C459.

This sequence belongs to the glycosyl hydrolase 13 family. Monomer. Requires Ca(2+) as cofactor. Chloride serves as cofactor.

It localises to the secreted. The catalysed reaction is Endohydrolysis of (1-&gt;4)-alpha-D-glucosidic linkages in polysaccharides containing three or more (1-&gt;4)-alpha-linked D-glucose units.. In Drosophila teissieri (Fruit fly), this protein is Alpha-amylase-related protein (Amyrel).